Consider the following 304-residue polypeptide: Secreted mono- and diacylglycerol lipase LIP1 (304 aa).

The signal sequence occupies residues 1-19 (MLFSRFVLLAFGSVAAVSA). T32 is a glycosylation site (O-linked (Man...) threonine). A disulfide bond links C57 and C297. S171 serves as the catalytic Nucleophile. D228 is an active-site residue. The N-linked (GlcNAc...) asparagine glycan is linked to N253. Residue H281 is part of the active site.

This sequence belongs to the AB hydrolase superfamily. Lipase family. Class 3 subfamily.

The protein resides in the secreted. Its subcellular location is the cell wall. It carries out the reaction a monoacylglycerol + H2O = glycerol + a fatty acid + H(+). The catalysed reaction is a diacylglycerol + H2O = a monoacylglycerol + a fatty acid + H(+). RHC 80267, a well-known inhibitor of diacylglycerol lipases from mammals, also acts as an inhibitor for LIP1/SMG1. In terms of biological role, secreted lipase involved in Dandruff and seborrheic dermatitis (D/SD) probably via lipase-mediated breakdown of sebaceous lipids and release of irritating free fatty acids. Shows activity against monoglyceride and diglyceride substrates, but not triglyceride substrates and does not exhibit regio-selective production of diacylglycerols. Able to hydrolyze diacylglycerols such as distearin, dilinolein, dipalmitoylglycerol and dipalmitolein. Cleaves oleic acid from 1,2 isomers of diolein on both the 1 and the 2 position of the glycerol backbone, resulting mainly in free fatty acids but no monoolein is detected. Shows activity on monoolein and liberates mostly free fatty acids, but can also perform the reverse reaction and produce diolein. The sequence is that of Secreted mono- and diacylglycerol lipase LIP1 from Malassezia globosa (strain ATCC MYA-4612 / CBS 7966) (Dandruff-associated fungus).